The following is a 497-amino-acid chain: Putative aldehyde dehydrogenase AldA (497 aa).

213-219 (GKGSESG) is a binding site for NAD(+). Active-site residues include glutamate 257 and cysteine 291.

This sequence belongs to the aldehyde dehydrogenase family.

The enzyme catalyses an aldehyde + NAD(+) + H2O = a carboxylate + NADH + 2 H(+). In Staphylococcus epidermidis (strain ATCC 35984 / DSM 28319 / BCRC 17069 / CCUG 31568 / BM 3577 / RP62A), this protein is Putative aldehyde dehydrogenase AldA (aldA).